The chain runs to 346 residues: MEKLARQQIQALTPYLSARRIGGSGDVWLNANESPFNNEYKTDFARLNRYSDCQPKAMIQAYANYAGVQPEQVLTSRGADEGIELLIRAFCEPNQDAILFCPPTYGMYAISAETFGVERKKVPLTTDWQLDLPSIEANLDRVKLVFVCSPNNPTGNLVKRADIIKLLEMTQDRAIVVMDEAYIDFCPEASTVDLLAQYPNLAILRTLSKAFALAGLRCGFTLANAELINVLLKVIAPYPVPVPVAEIAVQALSPAGLARAKYQVLDLGANRAYLQVGLSMVPGVQVFEGWGNYLLVKFPDGDALFKAAWEHGIILRNSPIENCVRISVGNREECEKTVAFIRNYYQ.

Residue lysine 209 is modified to N6-(pyridoxal phosphate)lysine.

The protein belongs to the class-II pyridoxal-phosphate-dependent aminotransferase family. Histidinol-phosphate aminotransferase subfamily. Homodimer. It depends on pyridoxal 5'-phosphate as a cofactor.

It catalyses the reaction L-histidinol phosphate + 2-oxoglutarate = 3-(imidazol-4-yl)-2-oxopropyl phosphate + L-glutamate. It participates in amino-acid biosynthesis; L-histidine biosynthesis; L-histidine from 5-phospho-alpha-D-ribose 1-diphosphate: step 7/9. The polypeptide is Histidinol-phosphate aminotransferase (Vibrio cholerae serotype O1 (strain ATCC 39541 / Classical Ogawa 395 / O395)).